The primary structure comprises 364 residues: MQNPKEKMDLSQFILSLIFIIAISATSFLIIQPFILGFSWASMIVIATWPLMLKMQKFLGGKRLVAVIGMIIILLLLFIIPIVFLVNSLIKTSIPLIHWFSSNNLEFPELIWLQDIPIIGKKIFISYQELLDSDGGELIREIRPYMGRTTEFFIIQAKNCGLFIMHLTLMLLFSLLLYWNGEKISNSIRQFASRLSSRNGEAIVLLSVQAVRAVALGVVVTALIQAVLSGIGLLISGVPYWTLLMILIVFSCLIQLGPLPILIPSVIWLYWNSNTTWGTLLLIWSCFVFILDNILRPFFIRIGSDLPTFLILLGVIGGLLAFGMIGLFIGPVVLVILYRLIVSWIYGISIASFLENTTLKSKSN.

Transmembrane regions (helical) follow at residues 18–38 (IFIIAISATSFLIIQPFILGF), 40–60 (WASMIVIATWPLMLKMQKFLG), 65–85 (VAVIGMIIILLLLFIIPIVFL), 161–181 (GLFIMHLTLMLLFSLLLYWNG), 215–235 (ALGVVVTALIQAVLSGIGLLI), 243–263 (LLMILIVFSCLIQLGPLPILI), 280–300 (LLLIWSCFVFILDNILRPFFI), 309–329 (FLILLGVIGGLLAFGMIGLFI), and 331–351 (PVVLVILYRLIVSWIYGISIA).

This sequence belongs to the autoinducer-2 exporter (AI-2E) (TC 2.A.86) family.

Its subcellular location is the cell membrane. The protein is Putative transport protein BUsg_115 of Buchnera aphidicola subsp. Schizaphis graminum (strain Sg).